The primary structure comprises 69 residues: Cytochrome c oxidase subunit 8A, mitochondrial (69 aa).

Residues 1 to 25 (MSVLTPLLLRSLTGSARRLMVPRAQ) constitute a mitochondrion transit peptide. The SIFI-degron signature appears at 2 to 19 (SVLTPLLLRSLTGSARRL). Over 26 to 36 (VHSKPAREQLG) the chain is Mitochondrial matrix. A helical transmembrane segment spans residues 37–60 (VLDITIGLTSCFVCCLLPAGWVLS). The Mitochondrial intermembrane segment spans residues 61–69 (HLESYKKRE).

It belongs to the cytochrome c oxidase VIII family. As to quaternary structure, component of the cytochrome c oxidase (complex IV, CIV), a multisubunit enzyme composed of 14 subunits. The complex is composed of a catalytic core of 3 subunits MT-CO1, MT-CO2 and MT-CO3, encoded in the mitochondrial DNA, and 11 supernumerary subunits COX4I, COX5A, COX5B, COX6A, COX6B, COX6C, COX7A, COX7B, COX7C, COX8 and NDUFA4, which are encoded in the nuclear genome. The complex exists as a monomer or a dimer and forms supercomplexes (SCs) in the inner mitochondrial membrane with NADH-ubiquinone oxidoreductase (complex I, CI) and ubiquinol-cytochrome c oxidoreductase (cytochrome b-c1 complex, complex III, CIII), resulting in different assemblies (supercomplex SCI(1)III(2)IV(1) and megacomplex MCI(2)III(2)IV(2)). Post-translationally, in response to mitochondrial stress, the precursor protein is ubiquitinated by the SIFI complex in the cytoplasm before mitochondrial import, leading to its degradation. Within the SIFI complex, UBR4 initiates ubiquitin chain that are further elongated or branched by KCMF1.

It is found in the mitochondrion inner membrane. Its pathway is energy metabolism; oxidative phosphorylation. Component of the cytochrome c oxidase, the last enzyme in the mitochondrial electron transport chain which drives oxidative phosphorylation. The respiratory chain contains 3 multisubunit complexes succinate dehydrogenase (complex II, CII), ubiquinol-cytochrome c oxidoreductase (cytochrome b-c1 complex, complex III, CIII) and cytochrome c oxidase (complex IV, CIV), that cooperate to transfer electrons derived from NADH and succinate to molecular oxygen, creating an electrochemical gradient over the inner membrane that drives transmembrane transport and the ATP synthase. Cytochrome c oxidase is the component of the respiratory chain that catalyzes the reduction of oxygen to water. Electrons originating from reduced cytochrome c in the intermembrane space (IMS) are transferred via the dinuclear copper A center (CU(A)) of subunit 2 and heme A of subunit 1 to the active site in subunit 1, a binuclear center (BNC) formed by heme A3 and copper B (CU(B)). The BNC reduces molecular oxygen to 2 water molecules using 4 electrons from cytochrome c in the IMS and 4 protons from the mitochondrial matrix. The polypeptide is Cytochrome c oxidase subunit 8A, mitochondrial (Cox8a) (Mus musculus (Mouse)).